A 160-amino-acid chain; its full sequence is Phosphopantetheine adenylyltransferase (160 aa).

S10 provides a ligand contact to substrate. Residues 10–11 (SF) and H18 contribute to the ATP site. Positions 42, 74, and 88 each coordinate substrate. ATP is bound by residues 89–91 (GLR), E99, and 124–130 (YSFLSSS).

This sequence belongs to the bacterial CoaD family. As to quaternary structure, homohexamer. Mg(2+) serves as cofactor.

It is found in the cytoplasm. It carries out the reaction (R)-4'-phosphopantetheine + ATP + H(+) = 3'-dephospho-CoA + diphosphate. Its pathway is cofactor biosynthesis; coenzyme A biosynthesis; CoA from (R)-pantothenate: step 4/5. Reversibly transfers an adenylyl group from ATP to 4'-phosphopantetheine, yielding dephospho-CoA (dPCoA) and pyrophosphate. The polypeptide is Phosphopantetheine adenylyltransferase (Bacillus pumilus (strain SAFR-032)).